Reading from the N-terminus, the 38-residue chain is Potassium channel toxin alpha-KTx 6.4 (38 aa).

4 disulfides stabilise this stretch: Cys6–Cys27, Cys12–Cys32, Cys16–Cys34, and Cys22–Cys37.

Belongs to the short scorpion toxin superfamily. Potassium channel inhibitor family. Alpha-KTx 06 subfamily. As to expression, expressed by the venom gland.

The protein localises to the secreted. Functionally, potently, completely and reversibly blocks voltage-gated potassium channel Kv1.2/KCNA2 and Shaker B (Sh). Also blocks small conductance (SK) calcium-activated potassium channel (KCNN). In Pandinus imperator (Emperor scorpion), this protein is Potassium channel toxin alpha-KTx 6.4.